The following is a 399-amino-acid chain: Guanine nucleotide-binding protein negative regulator 1 (399 aa).

WD repeat units follow at residues lysine 44–lysine 83, tyrosine 105–serine 145, aspartate 150–threonine 194, serine 207–leucine 247, glutamate 252–tyrosine 292, and glycine 296–histidine 337.

Interacts with gpa1.

It is found in the cytoplasm. Its function is as follows. Negatively regulates the pheromone-response pathway. Acts as a structural mimic of the G protein beta subunit thereby interacting with gpa1 which then inhibits gpa1 signaling. This chain is Guanine nucleotide-binding protein negative regulator 1 (gnr1), found in Schizosaccharomyces pombe (strain 972 / ATCC 24843) (Fission yeast).